The following is a 438-amino-acid chain: Cytochrome P450 monooxygenase claJ (438 aa).

Heme is bound at residue Cys378.

The protein belongs to the cytochrome P450 family. It depends on heme as a cofactor.

Its pathway is secondary metabolite biosynthesis. Cytochrome P450 monooxygenase; part of the cla gene cluster that produces clavatol and ortho-quinone methide. The clavatol biosynthesis cluster cla and the terrestric acid cluster tra are both involved in the production of peniphenones and penilactones. The non-reducing PKS claF is responsible for the formation of clavatol from successive condensations of 3 malonyl-CoA units, presumably with a simple acetyl-CoA starter unit, and 2 methylation steps. The esterase claE probably collaborates with claF by catalyzing the hydrolysis of ACP-bound acyl intermediates to free the ACP from stalled intermediates. The clavatol oxidase claD then converts clavatol to hydroxyclavatol. Spontaneous dehydration of hydroxyclavatol leads to the accumulation of the highly active ortho-quinone methide. On the other hand, the PKS-NRPS hybrid traA is involved in the formation of crustosic acid, with the help of traB and traD. The polyketide synthase module (PKS) of traA is responsible for the synthesis of the polyketide backbone via the condensation of an acetyl-CoA starter unit with 3 malonyl-CoA units. The downstream nonribosomal peptide synthetase (NRPS) module then amidates the carboxyl end of the polyketide with L-malic acid. Because traA lacks a designated enoylreductase (ER) domain, the required activity is provided the enoyl reductase traG. Crustosic acid undergoes decarboxylation and isomerization to the terrestric acid, catalyzed by the 2-oxoglutarate-dependent dioxygenase traH. Both acids are further converted to the 2 gamma-butyrolactones (R)-5-methyltetronic acid and (S)-5-carboxylmethyltetronic acid, with involvement of the cytochrome P450 monooxygenase claJ. Spontaneous addition of the methide to these gamma-butyrolactones leads to peniphenone D and penilactone D, which undergo again stereospecific attacking by methide to give penilactones A and B. This Penicillium crustosum (Blue mold fungus) protein is Cytochrome P450 monooxygenase claJ.